Consider the following 419-residue polypeptide: MDEEEVEVVESPSEVLQPEVTVVVTGEPPEAAEEDLDYEEEEETSPEVIETLSLLDVLRVSAVMEDVIDQLSILGYIIPVQYERRQSLTQKASHEGASMITTTPKKSTSLLTKEKSMMAENKQRGQDFTFKKPTKQTMMTLETLKKIQNDRQYFSDVIANAMMEMQDSGSFTSLLKALGKERDSKMNFHDVITREEKGRKQIKTLQKQLLDVKRERQMQVQNGNEYIAHLRDQLQEMKAKTNLENLYMKRNAELQISQTQKKCNRAEELLLEEIEKLRMKTEEENRVHTEIEMFLKKQQQKLEEKLEFWMEKFDKDTEAKQNELNALKAAKASDLVHLQDLAKMIREYEQVIIEDRIEKEKTRKKLEQDDLELRSIVKLQAWWRGSVVRKEIGNFKMPKKDKDDSKDSKGKEKEKRRKK.

Disordered stretches follow at residues Thr25–Ser45 and Asn394–Lys419. The segment covering Glu30–Ser45 has biased composition (acidic residues). The 30-residue stretch at Glu372–Asp401 folds into the IQ domain. Over residues Asn394–Lys413 the composition is skewed to basic and acidic residues.

It belongs to the DRC9 family. Component of the nexin-dynein regulatory complex (N-DRC). Interacts (via IQ domain) with CALM when calcium levels are low. Does not interact with CALM in the presence of Ca(2+). Interacts with the HSP70 proteins HSPA1L and HSPA8. May form a complex with CAMK4 and HSP70. In terms of tissue distribution, expressed in the testes (at protein level). Also detected in oviduct (at protein level). Also detected in the trachea.

It is found in the cytoplasm. Its subcellular location is the cell projection. The protein resides in the cilium. It localises to the flagellum. The protein localises to the cytoskeleton. It is found in the flagellum axoneme. In terms of biological role, component of the nexin-dynein regulatory complex (N-DRC), a key regulator of ciliary/flagellar motility which maintains the alignment and integrity of the distal axoneme and regulates microtubule sliding in motile axonemes. Binds calmodulin when cellular Ca(2+) levels are low and thereby contributes to the regulation of calcium and calmodulin-dependent protein kinase IV (CAMK4) activity; contributes to the regulation of CAMK4 signaling cascades. Required for normal axoneme assembly in sperm flagella, normal sperm tail formation and for male fertility. The protein is Dynein regulatory complex protein 9 (Iqcg) of Mus musculus (Mouse).